Here is a 415-residue protein sequence, read N- to C-terminus: Serine hydroxymethyltransferase (415 aa).

Residues leucine 117 and 121 to 123 each bind (6S)-5,6,7,8-tetrahydrofolate; that span reads GHL. N6-(pyridoxal phosphate)lysine is present on lysine 226. Residues glutamate 241 and 349 to 351 each bind (6S)-5,6,7,8-tetrahydrofolate; that span reads SPF.

The protein belongs to the SHMT family. In terms of assembly, homodimer. Requires pyridoxal 5'-phosphate as cofactor.

Its subcellular location is the cytoplasm. The enzyme catalyses (6R)-5,10-methylene-5,6,7,8-tetrahydrofolate + glycine + H2O = (6S)-5,6,7,8-tetrahydrofolate + L-serine. It functions in the pathway one-carbon metabolism; tetrahydrofolate interconversion. The protein operates within amino-acid biosynthesis; glycine biosynthesis; glycine from L-serine: step 1/1. In terms of biological role, catalyzes the reversible interconversion of serine and glycine with tetrahydrofolate (THF) serving as the one-carbon carrier. This reaction serves as the major source of one-carbon groups required for the biosynthesis of purines, thymidylate, methionine, and other important biomolecules. Also exhibits THF-independent aldolase activity toward beta-hydroxyamino acids, producing glycine and aldehydes, via a retro-aldol mechanism. This Trichlorobacter lovleyi (strain ATCC BAA-1151 / DSM 17278 / SZ) (Geobacter lovleyi) protein is Serine hydroxymethyltransferase.